Here is a 367-residue protein sequence, read N- to C-terminus: Leucine dehydrogenase (367 aa).

Lysine 80 is a catalytic residue. NAD(+) is bound at residue 180–186 (GVGNVAY).

This sequence belongs to the Glu/Leu/Phe/Val dehydrogenases family. Homohexamer.

The enzyme catalyses L-leucine + NAD(+) + H2O = 4-methyl-2-oxopentanoate + NH4(+) + NADH + H(+). It participates in amino-acid degradation; L-leucine degradation; 4-methyl-2-oxopentanoate from L-leucine (dehydrogenase route): step 1/1. Catalyzes the reversible deamination of L-leucine to 4-methyl-2-oxopentanoate. The protein is Leucine dehydrogenase (ldh) of Geobacillus stearothermophilus (Bacillus stearothermophilus).